The primary structure comprises 180 residues: Large ribosomal subunit protein uL5 (180 aa).

Belongs to the universal ribosomal protein uL5 family. Part of the 50S ribosomal subunit; part of the 5S rRNA/L5/L18/L25 subcomplex. Contacts the 5S rRNA and the P site tRNA. Forms a bridge to the 30S subunit in the 70S ribosome.

Functionally, this is one of the proteins that bind and probably mediate the attachment of the 5S RNA into the large ribosomal subunit, where it forms part of the central protuberance. In the 70S ribosome it contacts protein S13 of the 30S subunit (bridge B1b), connecting the 2 subunits; this bridge is implicated in subunit movement. Contacts the P site tRNA; the 5S rRNA and some of its associated proteins might help stabilize positioning of ribosome-bound tRNAs. The protein is Large ribosomal subunit protein uL5 of Lactococcus lactis subsp. lactis (strain IL1403) (Streptococcus lactis).